Reading from the N-terminus, the 322-residue chain is Phosphatidylserine decarboxylase proenzyme (322 aa).

Catalysis depends on charge relay system; for autoendoproteolytic cleavage activity residues aspartate 90, histidine 147, and serine 254. Serine 254 (schiff-base intermediate with substrate; via pyruvic acid; for decarboxylase activity) is an active-site residue. Position 254 is a pyruvic acid (Ser); by autocatalysis (serine 254). The tract at residues 293 to 322 is disordered; that stretch reads PDAEPAPLPAEEIEAEHDASPLVDDKKDQV. Positions 308-322 are enriched in basic and acidic residues; it reads EHDASPLVDDKKDQV.

The protein belongs to the phosphatidylserine decarboxylase family. PSD-B subfamily. Prokaryotic type I sub-subfamily. Heterodimer of a large membrane-associated beta subunit and a small pyruvoyl-containing alpha subunit. The cofactor is pyruvate. Is synthesized initially as an inactive proenzyme. Formation of the active enzyme involves a self-maturation process in which the active site pyruvoyl group is generated from an internal serine residue via an autocatalytic post-translational modification. Two non-identical subunits are generated from the proenzyme in this reaction, and the pyruvate is formed at the N-terminus of the alpha chain, which is derived from the carboxyl end of the proenzyme. The autoendoproteolytic cleavage occurs by a canonical serine protease mechanism, in which the side chain hydroxyl group of the serine supplies its oxygen atom to form the C-terminus of the beta chain, while the remainder of the serine residue undergoes an oxidative deamination to produce ammonia and the pyruvoyl prosthetic group on the alpha chain. During this reaction, the Ser that is part of the protease active site of the proenzyme becomes the pyruvoyl prosthetic group, which constitutes an essential element of the active site of the mature decarboxylase.

It localises to the cell membrane. It catalyses the reaction a 1,2-diacyl-sn-glycero-3-phospho-L-serine + H(+) = a 1,2-diacyl-sn-glycero-3-phosphoethanolamine + CO2. It participates in phospholipid metabolism; phosphatidylethanolamine biosynthesis; phosphatidylethanolamine from CDP-diacylglycerol: step 2/2. Functionally, catalyzes the formation of phosphatidylethanolamine (PtdEtn) from phosphatidylserine (PtdSer). The sequence is that of Phosphatidylserine decarboxylase proenzyme from Escherichia coli O45:K1 (strain S88 / ExPEC).